Reading from the N-terminus, the 543-residue chain is CTP synthase (543 aa).

The interval 1-265 (MTRYIFVTGG…DDFVVERFGL (265 aa)) is amidoligase domain. Serine 13 contributes to the CTP binding site. Serine 13 contributes to the UTP binding site. Residues 14–19 (SLGKGI) and aspartate 71 contribute to the ATP site. Mg(2+) is bound by residues aspartate 71 and glutamate 139. CTP contacts are provided by residues 146–148 (DIE), 186–191 (KTKPTQ), and lysine 222. UTP-binding positions include 186–191 (KTKPTQ) and lysine 222. A Glutamine amidotransferase type-1 domain is found at 290–541 (TIAMVGKYME…VKAALAQHQK (252 aa)). Position 351 (glycine 351) interacts with L-glutamine. Cysteine 378 acts as the Nucleophile; for glutamine hydrolysis in catalysis. L-glutamine contacts are provided by residues 379-382 (LGMQ), glutamate 402, and arginine 469. Catalysis depends on residues histidine 514 and glutamate 516.

The protein belongs to the CTP synthase family. As to quaternary structure, homotetramer.

It carries out the reaction UTP + L-glutamine + ATP + H2O = CTP + L-glutamate + ADP + phosphate + 2 H(+). The catalysed reaction is L-glutamine + H2O = L-glutamate + NH4(+). The enzyme catalyses UTP + NH4(+) + ATP = CTP + ADP + phosphate + 2 H(+). It functions in the pathway pyrimidine metabolism; CTP biosynthesis via de novo pathway; CTP from UDP: step 2/2. Allosterically activated by GTP, when glutamine is the substrate; GTP has no effect on the reaction when ammonia is the substrate. The allosteric effector GTP functions by stabilizing the protein conformation that binds the tetrahedral intermediate(s) formed during glutamine hydrolysis. Inhibited by the product CTP, via allosteric rather than competitive inhibition. Catalyzes the ATP-dependent amination of UTP to CTP with either L-glutamine or ammonia as the source of nitrogen. Regulates intracellular CTP levels through interactions with the four ribonucleotide triphosphates. This chain is CTP synthase, found in Pseudomonas savastanoi pv. phaseolicola (strain 1448A / Race 6) (Pseudomonas syringae pv. phaseolicola (strain 1448A / Race 6)).